An 872-amino-acid polypeptide reads, in one-letter code: F-box protein pof6 (872 aa).

The 46-residue stretch at 30-75 folds into the F-box domain; that stretch reads FGCLTINIYLKIFTLISTPDLCNCRLVCRKFQQLCDYNSIYVKKLL. Positions 101–122 are disordered; that stretch reads MSSNTSKGFHLQSSDKKYADSD. The segment covering 113–122 has biased composition (basic and acidic residues); it reads SSDKKYADSD.

Interacts with skp1. Forms a complex with pof6 and skp1.

It is found in the cytoplasm. The protein resides in the nucleus. Its function is as follows. Together with skp1, essential for septum processing and cell separation. This Schizosaccharomyces pombe (strain 972 / ATCC 24843) (Fission yeast) protein is F-box protein pof6 (pof6).